Here is a 488-residue protein sequence, read N- to C-terminus: 3-octaprenyl-4-hydroxybenzoate carboxy-lyase (488 aa).

A Mn(2+)-binding site is contributed by asparagine 172. Residues 175–177, 189–191, and 194–195 each bind prenylated FMN; these read IYR, RWL, and RG. Position 238 (glutamate 238) interacts with Mn(2+). Residue aspartate 287 is the Proton donor of the active site.

The protein belongs to the UbiD family. As to quaternary structure, homohexamer. Prenylated FMN is required as a cofactor. Mn(2+) serves as cofactor.

It is found in the cell membrane. The enzyme catalyses a 4-hydroxy-3-(all-trans-polyprenyl)benzoate + H(+) = a 2-(all-trans-polyprenyl)phenol + CO2. It participates in cofactor biosynthesis; ubiquinone biosynthesis. Catalyzes the decarboxylation of 3-octaprenyl-4-hydroxy benzoate to 2-octaprenylphenol, an intermediate step in ubiquinone biosynthesis. In Pseudoalteromonas translucida (strain TAC 125), this protein is 3-octaprenyl-4-hydroxybenzoate carboxy-lyase.